The sequence spans 428 residues: Aspartate--tRNA(Asp) ligase (428 aa).

Glutamate 170 lines the L-aspartate pocket. The interval 192–195 (QLYK) is aspartate. Arginine 213 provides a ligand contact to L-aspartate. ATP is bound by residues 213–215 (RAE) and glutamate 351. Mg(2+)-binding residues include glutamate 351 and serine 354. Residues serine 354 and arginine 358 each coordinate L-aspartate. An ATP-binding site is contributed by 399–402 (GFNR).

This sequence belongs to the class-II aminoacyl-tRNA synthetase family. Type 2 subfamily. In terms of assembly, homodimer. The cofactor is Mg(2+).

Its subcellular location is the cytoplasm. The catalysed reaction is tRNA(Asp) + L-aspartate + ATP = L-aspartyl-tRNA(Asp) + AMP + diphosphate. Functionally, catalyzes the attachment of L-aspartate to tRNA(Asp) in a two-step reaction: L-aspartate is first activated by ATP to form Asp-AMP and then transferred to the acceptor end of tRNA(Asp). In Pyrobaculum aerophilum (strain ATCC 51768 / DSM 7523 / JCM 9630 / CIP 104966 / NBRC 100827 / IM2), this protein is Aspartate--tRNA(Asp) ligase.